A 165-amino-acid chain; its full sequence is Crossover junction endodeoxyribonuclease RuvC (165 aa).

Residues D8, E67, and D139 contribute to the active site. Positions 8, 67, and 139 each coordinate Mg(2+).

Belongs to the RuvC family. Homodimer which binds Holliday junction (HJ) DNA. The HJ becomes 2-fold symmetrical on binding to RuvC with unstacked arms; it has a different conformation from HJ DNA in complex with RuvA. In the full resolvosome a probable DNA-RuvA(4)-RuvB(12)-RuvC(2) complex forms which resolves the HJ. Mg(2+) is required as a cofactor.

The protein resides in the cytoplasm. The enzyme catalyses Endonucleolytic cleavage at a junction such as a reciprocal single-stranded crossover between two homologous DNA duplexes (Holliday junction).. The RuvA-RuvB-RuvC complex processes Holliday junction (HJ) DNA during genetic recombination and DNA repair. Endonuclease that resolves HJ intermediates. Cleaves cruciform DNA by making single-stranded nicks across the HJ at symmetrical positions within the homologous arms, yielding a 5'-phosphate and a 3'-hydroxyl group; requires a central core of homology in the junction. The consensus cleavage sequence is 5'-(A/T)TT(C/G)-3'. Cleavage occurs on the 3'-side of the TT dinucleotide at the point of strand exchange. HJ branch migration catalyzed by RuvA-RuvB allows RuvC to scan DNA until it finds its consensus sequence, where it cleaves and resolves the cruciform DNA. In Alkalilimnicola ehrlichii (strain ATCC BAA-1101 / DSM 17681 / MLHE-1), this protein is Crossover junction endodeoxyribonuclease RuvC.